The primary structure comprises 597 residues: Elongation factor 4 (597 aa).

Residues 2-184 (KNIRNFSIIA…EVVNKIPPPK (183 aa)) enclose the tr-type G domain. Residues 14-19 (DHGKST) and 131-134 (NKID) contribute to the GTP site.

It belongs to the TRAFAC class translation factor GTPase superfamily. Classic translation factor GTPase family. LepA subfamily.

It localises to the cell inner membrane. The catalysed reaction is GTP + H2O = GDP + phosphate + H(+). Its function is as follows. Required for accurate and efficient protein synthesis under certain stress conditions. May act as a fidelity factor of the translation reaction, by catalyzing a one-codon backward translocation of tRNAs on improperly translocated ribosomes. Back-translocation proceeds from a post-translocation (POST) complex to a pre-translocation (PRE) complex, thus giving elongation factor G a second chance to translocate the tRNAs correctly. Binds to ribosomes in a GTP-dependent manner. The polypeptide is Elongation factor 4 (Chromobacterium violaceum (strain ATCC 12472 / DSM 30191 / JCM 1249 / CCUG 213 / NBRC 12614 / NCIMB 9131 / NCTC 9757 / MK)).